The following is an 872-amino-acid chain: Alanine--tRNA ligase (872 aa).

Histidine 567, histidine 571, cysteine 669, and histidine 673 together coordinate Zn(2+).

This sequence belongs to the class-II aminoacyl-tRNA synthetase family. The cofactor is Zn(2+).

It localises to the cytoplasm. The enzyme catalyses tRNA(Ala) + L-alanine + ATP = L-alanyl-tRNA(Ala) + AMP + diphosphate. In terms of biological role, catalyzes the attachment of alanine to tRNA(Ala) in a two-step reaction: alanine is first activated by ATP to form Ala-AMP and then transferred to the acceptor end of tRNA(Ala). Also edits incorrectly charged Ser-tRNA(Ala) and Gly-tRNA(Ala) via its editing domain. This Streptococcus pyogenes serotype M3 (strain ATCC BAA-595 / MGAS315) protein is Alanine--tRNA ligase.